The chain runs to 699 residues: Triacylglycerol hydrolase DDHD2 (699 aa).

Polar residues predominate over residues M1–L11. The segment at M1–S25 is disordered. Over residues S12–S25 the composition is skewed to low complexity. Positions D30–R112 constitute a WWE domain. S351 (nucleophile) is an active-site residue. The SAM domain occupies D383–K445. Residue S447 is modified to Phosphoserine. A DDHD domain is found at L484–Q688. The interval Q599–P635 is disordered. A compositionally biased stretch (acidic residues) spans T603–S613.

The protein belongs to the PA-PLA1 family. In terms of assembly, forms homooligomers and, to a much smaller extent, heterooligomers with DDHD1.

The protein localises to the cytoplasm. Its subcellular location is the cytosol. The protein resides in the endoplasmic reticulum-Golgi intermediate compartment. It is found in the golgi apparatus. It localises to the cis-Golgi network. The catalysed reaction is a triacylglycerol + H2O = a diacylglycerol + a fatty acid + H(+). It carries out the reaction a diacylglycerol + H2O = a monoacylglycerol + a fatty acid + H(+). The enzyme catalyses a 1,3-diacylglycerol + H2O = a 1-acylglycerol + a fatty acid + H(+). It catalyses the reaction a 1-acylglycerol + H2O = glycerol + a fatty acid + H(+). The catalysed reaction is 1,2,3-tri-(9Z-octadecenoyl)-glycerol + H2O = di-(9Z)-octadecenoylglycerol + (9Z)-octadecenoate + H(+). It carries out the reaction di-(9Z)-octadecenoylglycerol + H2O = (9Z-octadecenoyl)-glycerol + (9Z)-octadecenoate + H(+). The enzyme catalyses 1,3-di-(9Z-octadecenoyl)-glycerol + H2O = 1-(9Z-octadecenoyl)-glycerol + (9Z)-octadecenoate + H(+). It catalyses the reaction trihexadecanoylglycerol + H2O = dihexadecanoylglycerol + hexadecanoate + H(+). The catalysed reaction is 1,2-di-(9Z-octadecenoyl)-sn-glycero-3-phosphocholine + H2O = (9Z-octadecenoyl)-sn-glycero-3-phosphocholine + (9Z)-octadecenoate + H(+). It carries out the reaction 1-(9Z-octadecenoyl)-glycerol + H2O = glycerol + (9Z)-octadecenoate + H(+). The enzyme catalyses 1,2-di-(9Z-octadecenoyl)-sn-glycero-3-phosphate + H2O = 2-(9Z-octadecenoyl)-sn-glycero-3-phosphate + (9Z)-octadecenoate + H(+). It catalyses the reaction 1-hexadecanoyl-2-(9Z-octadecenoyl)-sn-glycero-3-phosphate + H2O = 2-(9Z-octadecenoyl)-sn-glycero-3-phosphate + hexadecanoate + H(+). The catalysed reaction is 1-hexadecanoyl-2-(9Z-octadecenoyl)-sn-glycero-3-phosphoethanolamine + H2O = 2-(9Z-octadecenoyl)-sn-glycero-3-phosphoethanolamine + hexadecanoate + H(+). It carries out the reaction 1-hexadecanoyl-2-(9Z-octadecenoyl)-sn-glycero-3-phospho-L-serine + H2O = 2-(9Z-octadecenoyl)-sn-glycero-3-phospho-L-serine + hexadecanoate + H(+). The enzyme catalyses 1-hexadecanoyl-2-(9Z-octadecenoyl)-sn-glycero-3-phosphocholine + H2O = 2-(9Z-octadecenoyl)-sn-glycero-3-phosphocholine + hexadecanoate + H(+). In terms of biological role, diacylglycerol (DAG) and triacylglycerol (TAG) lipase that is required for proper lipid homeostasis in the central nervous system. It cooperates with PNPLA2/ATGL in neuronal TAG catabolism and hydrolyzes sn-1,3-DAG downstream of PNPLA2/ATGL. In vitro, also acts as a phospholipase that hydrolyzes preferentially phosphatidic acids, including 1,2-dioleoyl-sn-phosphatidic acid, phosphatidylcholine and phosphatidylethanolamine. Specifically binds to phosphatidylinositol 3-phosphate (PI(3)P), phosphatidylinositol 4-phosphate (PI(4)P), phosphatidylinositol 5-phosphate (PI(5)P) and possibly phosphatidylinositol 4,5-bisphosphate (PI(4,5)P2). May be involved in the maintenance of the endoplasmic reticulum and/or Golgi structures. May regulate the transport between Golgi apparatus and plasma membrane. In Mus musculus (Mouse), this protein is Triacylglycerol hydrolase DDHD2.